Reading from the N-terminus, the 213-residue chain is Insulin-like peptide INSL6 (213 aa).

Positions 1-20 (MPRLLRLSLLWLGLLLVRFS) are cleaved as a signal peptide. 3 disulfide bridges follow: cysteine 33–cysteine 179, cysteine 45–cysteine 192, and cysteine 178–cysteine 183. Residues 55–168 (FEEETPFSRL…SNLFWGHHPQ (114 aa)) constitute a propeptide, connecting peptide. Positions 201 to 213 (LKEKRSSLVTKIY) are excised as a propeptide.

It belongs to the insulin family. As to expression, testis specific.

The protein localises to the secreted. May have a role in sperm development and fertilization. This chain is Insulin-like peptide INSL6 (INSL6), found in Homo sapiens (Human).